A 77-amino-acid chain; its full sequence is Translation initiation factor IF-1, chloroplastic (77 aa).

An S1-like domain is found at 1-71; that stretch reads MKEQKWIHEG…TRGRIIYRLR (71 aa).

The protein belongs to the IF-1 family. Component of the 30S ribosomal translation pre-initiation complex which assembles on the 30S ribosome in the order IF-2 and IF-3, IF-1 and N-formylmethionyl-tRNA(fMet); mRNA recruitment can occur at any time during PIC assembly.

The protein localises to the plastid. It localises to the chloroplast. In terms of biological role, one of the essential components for the initiation of protein synthesis. Stabilizes the binding of IF-2 and IF-3 on the 30S subunit to which N-formylmethionyl-tRNA(fMet) subsequently binds. Helps modulate mRNA selection, yielding the 30S pre-initiation complex (PIC). Upon addition of the 50S ribosomal subunit IF-1, IF-2 and IF-3 are released leaving the mature 70S translation initiation complex. This Hedera helix (English ivy) protein is Translation initiation factor IF-1, chloroplastic.